The chain runs to 134 residues: Putative transposase InsN for insertion sequence element IS911A (134 aa).

It belongs to the transposase 8 family.

In terms of biological role, involved in the transposition of the insertion sequence IS911. The chain is Putative transposase InsN for insertion sequence element IS911A (insN1) from Escherichia coli (strain K12).